A 288-amino-acid polypeptide reads, in one-letter code: Bifunctional protein FolD (288 aa).

Residues 171–173 (GRS), Ser196, and Thr237 each bind NADP(+).

This sequence belongs to the tetrahydrofolate dehydrogenase/cyclohydrolase family. Homodimer.

The enzyme catalyses (6R)-5,10-methylene-5,6,7,8-tetrahydrofolate + NADP(+) = (6R)-5,10-methenyltetrahydrofolate + NADPH. It carries out the reaction (6R)-5,10-methenyltetrahydrofolate + H2O = (6R)-10-formyltetrahydrofolate + H(+). The protein operates within one-carbon metabolism; tetrahydrofolate interconversion. Catalyzes the oxidation of 5,10-methylenetetrahydrofolate to 5,10-methenyltetrahydrofolate and then the hydrolysis of 5,10-methenyltetrahydrofolate to 10-formyltetrahydrofolate. This Elusimicrobium minutum (strain Pei191) protein is Bifunctional protein FolD.